The chain runs to 296 residues: MTTKEAIADMALEAQEEDDAGPPDGGFRAWLVVLGGFLAYFVTFGMLNSFGTFQEYYGEKLLPGRSTSEISWIGSLQLFLLFIGGLFFGPVFDAKGSKVLFIPGTLLLSLSQMMVSLCKEYYQFILAQSLLFGIAVAMLFYPTISAISHWFHHRRGLAMGIVLTGSSLGGIAWPLILERLFAVVGFPWGLRIVGFISFALLAPACFMVIPRLPPRKSGGLSKADLSEGLKDRRYWLTVVGMLFVIWGMFIPFYYIPLFAMDHGVNSSFANSLISILNAGSFVGRIVSGALADKLGR.

The next 7 helical transmembrane spans lie at 30-50 (WLVV…LNSF), 72-92 (WIGS…GPVF), 98-118 (KVLF…VSLC), 124-144 (FILA…YPTI), 157-177 (LAMG…PLIL), 180-200 (LFAV…SFAL), and 238-258 (VVGM…IPLF). N-linked (GlcNAc...) asparagine glycosylation occurs at N265. The chain crosses the membrane as a helical span at residues 271–291 (SLISILNAGSFVGRIVSGALA).

The protein belongs to the major facilitator superfamily. Monocarboxylate porter (TC 2.A.1.13) family.

Its subcellular location is the cell membrane. Functionally, MFS-type transporter; part of the gene cluster that mediates the biosynthesis of pyranterreones, a family of antioxidative compounds. Directly involved in the secretion of pyranterreones. This is MFS-type transporter pytF from Aspergillus terreus (strain NIH 2624 / FGSC A1156).